Here is a 171-residue protein sequence, read N- to C-terminus: 6,7-dimethyl-8-ribityllumazine synthase (171 aa).

5-amino-6-(D-ribitylamino)uracil contacts are provided by residues Phe-24, 58–60, and 82–84; these read ALE and AVI. 87–88 is a binding site for (2S)-2-hydroxy-3-oxobutyl phosphate; the sequence is ET. The Proton donor role is filled by His-90. Asn-115 contacts 5-amino-6-(D-ribitylamino)uracil. Residue Arg-129 participates in (2S)-2-hydroxy-3-oxobutyl phosphate binding. The segment at 150-171 is disordered; it reads ALDQLGDDEDEEEDEEDEEERA. The segment covering 154–171 has biased composition (acidic residues); it reads LGDDEDEEEDEEDEEERA.

It belongs to the DMRL synthase family.

It catalyses the reaction (2S)-2-hydroxy-3-oxobutyl phosphate + 5-amino-6-(D-ribitylamino)uracil = 6,7-dimethyl-8-(1-D-ribityl)lumazine + phosphate + 2 H2O + H(+). It participates in cofactor biosynthesis; riboflavin biosynthesis; riboflavin from 2-hydroxy-3-oxobutyl phosphate and 5-amino-6-(D-ribitylamino)uracil: step 1/2. In terms of biological role, catalyzes the formation of 6,7-dimethyl-8-ribityllumazine by condensation of 5-amino-6-(D-ribitylamino)uracil with 3,4-dihydroxy-2-butanone 4-phosphate. This is the penultimate step in the biosynthesis of riboflavin. The chain is 6,7-dimethyl-8-ribityllumazine synthase from Burkholderia ambifaria (strain MC40-6).